We begin with the raw amino-acid sequence, 257 residues long: Phycoerythrobilin:ferredoxin oxidoreductase (257 aa).

This sequence belongs to the HY2 family.

The enzyme catalyses (3Z)-phycoerythrobilin + oxidized 2[4Fe-4S]-[ferredoxin] = 15,16-dihydrobiliverdin + reduced 2[4Fe-4S]-[ferredoxin] + 2 H(+). In terms of biological role, catalyzes the two-electron reduction of the C2 and C3(1) diene system of 15,16-dihydrobiliverdin. This is Phycoerythrobilin:ferredoxin oxidoreductase from Prochlorococcus marinus (strain MIT 9303).